Consider the following 459-residue polypeptide: uncharacterized protein (459 aa).

One can recognise a TRAM domain in the interval 9–67; the sequence is KLEVGQTFPVTIKRLGINGEGVGYFKRQVVFIPGALPGEEVVAETTKIQRGFAEAKVKK. Cys80, Cys86, Cys89, and Cys168 together coordinate [4Fe-4S] cluster. Gln292, Tyr321, Asp342, and Asp390 together coordinate S-adenosyl-L-methionine. The Nucleophile role is filled by Cys417.

This sequence belongs to the class I-like SAM-binding methyltransferase superfamily. RNA M5U methyltransferase family.

This is an uncharacterized protein from Bacillus cereus (strain ATCC 10987 / NRS 248).